Consider the following 675-residue polypeptide: Anosmin-1 (675 aa).

Residues 1–21 form the signal peptide; it reads MVRRAPGASLALLLWVTAVSG. Intrachain disulfides connect Cys43–Cys77, Cys47–Cys71, Cys80–Cys99, Cys84–Cys95, and Cys110–Cys114. A glycan (N-linked (GlcNAc...) asparagine) is linked at Asn65. One can recognise a WAP domain in the interval 121-170; sequence LSVKQGDCPAPEKASGFAAACVESCEADSECSGVKKCCSNGCGHTCQVPK. 4 consecutive Fibronectin type-III domains span residues 180-281, 286-392, 418-515, and 545-652; these read PRKE…SKDP, APSN…TAQD, RRKP…FFVT, and KPEN…DLPP. N-linked (GlcNAc...) asparagine glycosylation is found at Asn203 and Asn294. Residues 388-402 show a composition bias toward polar residues; sequence STAQDNRNNNEQTSA. A disordered region spans residues 388–413; sequence STAQDNRNNNEQTSAGKPPKGLVDPY. N-linked (GlcNAc...) asparagine glycosylation is found at Asn465, Asn548, and Asn559. The tract at residues 654 to 675 is disordered; that stretch reads LPHRPHLKQHHPHHYKPPPEKY. Basic residues predominate over residues 656–669; it reads HRPHLKQHHPHHYK.

As to expression, mainly expressed in neurons of the central nervous system during the second half of embryonic life. Expressed in mitral neurons of the olfactory bulbs, striatal neurons, Purkinje cells of the cerebellum, retinal neurons and neurons of the brainstem and spinal cord.

It localises to the cell surface. Its function is as follows. May be an adhesion-like molecule with anti-protease activity. In Gallus gallus (Chicken), this protein is Anosmin-1.